The chain runs to 214 residues: Inner membrane-spanning protein YciB (214 aa).

Helical transmembrane passes span 11 to 31 (ILFFIAFKLYGIYVATAVAII), 50 to 70 (MHIITLALIVILGGATLILQD), 81 to 101 (VNWGFALVFLGSHFIGQKPII), 119 to 139 (LSYMWIAFFIFSGIANIYVAY), and 149 to 169 (FKLFGLMGLTLAFILIQGVYI).

This sequence belongs to the YciB family.

It localises to the cell inner membrane. Its function is as follows. Plays a role in cell envelope biogenesis, maintenance of cell envelope integrity and membrane homeostasis. The sequence is that of Inner membrane-spanning protein YciB from Hydrogenovibrio crunogenus (strain DSM 25203 / XCL-2) (Thiomicrospira crunogena).